Here is a 419-residue protein sequence, read N- to C-terminus: Napsin-A (419 aa).

An N-terminal signal peptide occupies residues 1–16 (MSPLLLLLLCLLLGNL). The 322-residue stretch at 73–394 (YFGTIGLGTP…KNVGPRVGLA (322 aa)) folds into the Peptidase A1 domain. Residue asparagine 85 is glycosylated (N-linked (GlcNAc...) asparagine). The active site involves aspartate 91. Cysteine 104 and cysteine 111 are disulfide-bonded. 2 N-linked (GlcNAc...) asparagine glycosylation sites follow: asparagine 128 and asparagine 149. Cysteine 269 and cysteine 273 form a disulfide bridge. Residue aspartate 278 is part of the active site. Cysteines 312 and 349 form a disulfide. Asparagine 331 carries N-linked (GlcNAc...) asparagine glycosylation. The interval 391–419 (VGLARAQSRSTDRAERRTTQAQFFKRRPG) is disordered.

The protein belongs to the peptidase A1 family. As to expression, expressed at the highest levels in the kidney, at a moderate level in the lung, and at low levels in the spleen and adipose tissue.

Its subcellular location is the secreted. Its function is as follows. May be involved in processing of pneumocyte surfactant precursors. The chain is Napsin-A (Napsa) from Mus musculus (Mouse).